We begin with the raw amino-acid sequence, 411 residues long: Phosphoglycerate kinase (411 aa).

Residues 19–21, R34, 57–60, R114, and R154 contribute to the substrate site; these read DLN and HQSR. ATP is bound by residues E332 and 358 to 361; that span reads GGHS.

Belongs to the phosphoglycerate kinase family. As to quaternary structure, monomer.

The protein resides in the cytoplasm. The enzyme catalyses (2R)-3-phosphoglycerate + ATP = (2R)-3-phospho-glyceroyl phosphate + ADP. It functions in the pathway carbohydrate degradation; glycolysis; pyruvate from D-glyceraldehyde 3-phosphate: step 2/5. This Thermococcus kodakarensis (strain ATCC BAA-918 / JCM 12380 / KOD1) (Pyrococcus kodakaraensis (strain KOD1)) protein is Phosphoglycerate kinase.